The sequence spans 292 residues: MPRAGVCGCWGGQVLPLLLAYICYLLLGATIFQLLEKQAEAQSRDQFQLEKLRFLENYTCLDQQALEQFVQVILEAWVKGVNPKGNSTNPSNWDFGSSFFFAGTVVTTIGYGNLAPSTEAGQVFCVFYALMGIPLNVVFLNHLGTGLRAHLTTLDRWEDHPRHSQLLQVLGLALFLTLGTLVILIFPPMFFSHVEGWSFREGFYFAFITLSTIGFGDYVVGTDPSKHYIAVYRSLAAIWILLGLAWLAVVLSLGSLLLHRCSRLWQLIRGLDLKDGAAPDSEPRSQKIPISA.

Residues methionine 1–glutamine 13 are Cytoplasmic-facing. The chain crosses the membrane as a helical span at residues valine 14 to leucine 34. The pore-forming intramembrane region spans serine 98–proline 116. K(+) is bound by residues threonine 108, isoleucine 109, glycine 110, and tyrosine 111. The interval threonine 108 to asparagine 113 is selectivity filter 1. Residues alanine 120–leucine 140 traverse the membrane as a helical segment. Residues asparagine 141–glutamine 165 lie on the Cytoplasmic side of the membrane. The helical transmembrane segment at leucine 166–phenylalanine 186 threads the bilayer. The segment at residues glycine 202–glycine 221 is an intramembrane region (pore-forming). Residues threonine 212, isoleucine 213, glycine 214, and phenylalanine 215 each coordinate K(+). Positions threonine 212–aspartate 217 are selectivity filter 2. A helical transmembrane segment spans residues isoleucine 238–leucine 258. Topologically, residues histidine 259–alanine 292 are cytoplasmic.

Belongs to the two pore domain potassium channel (TC 1.A.1.8) family. As to quaternary structure, homodimer; disulfide-linked. Heterodimer with KCNK17 and KCNK5. Expressed in pacreatic beta-cells (at protein level). Expressed in pacreatic delta-cells (at protein level).

The protein localises to the cell membrane. It localises to the endoplasmic reticulum membrane. It is found in the mitochondrion inner membrane. The enzyme catalyses K(+)(in) = K(+)(out). It carries out the reaction Rb(+)(in) = Rb(+)(out). It catalyses the reaction Cs(+)(in) = Cs(+)(out). K(+) channel that conducts voltage-dependent outward rectifying currents upon membrane depolarization. Voltage sensing is coupled to K(+) electrochemical gradient in an 'ion flux gating' mode where outward but not inward ion flow opens the gate. Homo- and heterodimerizes to form functional channels with distinct regulatory and gating properties. In pancreatic islets, conducts K(+) countercurrents for Ca(2+) release from the endoplasmic reticulum (ER) and regulates the frequency and duration of cytosolic Ca(2+) oscillations coupled to secretion of pancreatic hormones. In pancreatic beta cells, drives ER Ca(2+) efflux, which in turn activates Ca(2+)-dependent plasma membrane K(+) slow currents and cytosolic Ca(2+) influx, overall contributing to synchronous cytosolic Ca(2+) oscillations. Limits glucose-induced cytosolic Ca(2+) oscillations coupled to second-phase INS secretion. Contributes to beta cell adaptation to acute inflammation by maintaining normal cytosolic Ca(2+) levels and INS secretion. May regulate beta cell mitochondrial Ca(2+) levels either indirectly via ER Ca(2+) efflux or directly by hyperpolarizing the mitochondrial membrane potential. Limits mitochondrial Ca(2+) oscillations and ATP production involved in glucose homeostasis upon metabolic stress. In pancreatic delta cells, limits Ca(2+)-induced Ca(2+)-release involved in somatostatin secretion and modulates islet paracrine signaling involved in glucagon secretion. Permeable to other monovalent cations such as Rb(+) and Cs(+). In Mus musculus (Mouse), this protein is Potassium channel, subfamily K, member 16.